A 299-amino-acid chain; its full sequence is Probable lipid kinase YegS-like (299 aa).

The DAGKc domain maps to 2–133 (SRSAGSFLIL…IDIAHVNDKT (132 aa)). ATP-binding positions include Thr-40, 66-72 (GDGTINE), and Thr-95. Residues Leu-215, Asp-218, and Leu-220 each contribute to the Mg(2+) site. Glu-271 (proton acceptor) is an active-site residue.

This sequence belongs to the diacylglycerol/lipid kinase family. YegS lipid kinase subfamily. It depends on Mg(2+) as a cofactor. Requires Ca(2+) as cofactor.

The protein resides in the cytoplasm. In terms of biological role, probably phosphorylates lipids; the in vivo substrate is unknown. The sequence is that of Probable lipid kinase YegS-like from Cronobacter sakazakii (strain ATCC BAA-894) (Enterobacter sakazakii).